The following is a 450-amino-acid chain: Enolase (450 aa).

Q167 is a binding site for (2R)-2-phosphoglycerate. Catalysis depends on E209, which acts as the Proton donor. D250, E307, and D334 together coordinate Mg(2+). (2R)-2-phosphoglycerate is bound by residues K359, R388, S389, and K410. Residue K359 is the Proton acceptor of the active site.

This sequence belongs to the enolase family. Mg(2+) serves as cofactor.

It is found in the cytoplasm. It localises to the secreted. The protein localises to the cell surface. The catalysed reaction is (2R)-2-phosphoglycerate = phosphoenolpyruvate + H2O. The protein operates within carbohydrate degradation; glycolysis; pyruvate from D-glyceraldehyde 3-phosphate: step 4/5. Its function is as follows. Catalyzes the reversible conversion of 2-phosphoglycerate (2-PG) into phosphoenolpyruvate (PEP). It is essential for the degradation of carbohydrates via glycolysis. Functionally, 'Moonlights' as a plasminogen receptor and plasmin activator. Contributes to host (pig) cell adhesion; anti-enolase antibodies decrease binding to porcine kidney cells about 60%. Binds host plasminogen and fibronectin in vitro; enhances the activity of host tissue-specific plasminogen activator (tPA), and helps plasminogen and tPA degrade articifial host extracellular matrices. The sequence is that of Enolase from Mesomycoplasma hyorhinis (strain HUB-1) (Mycoplasma hyorhinis).